Here is a 212-residue protein sequence, read N- to C-terminus: uncharacterized protein (212 aa).

The segment at 1-88 (MAEEQKIALE…PAPAKPASAS (88 aa)) is disordered. Residue serine 13 is modified to Phosphoserine. Over residues 23-41 (ADTPAPAPAEIPAPAPAPT) the composition is skewed to pro residues. The span at 45–54 (VTKDVAEEKI) shows a compositional bias: basic and acidic residues.

Belongs to the remorin family.

The protein localises to the cell membrane. This is an uncharacterized protein from Arabidopsis thaliana (Mouse-ear cress).